Here is a 385-residue protein sequence, read N- to C-terminus: Tuliposide A-converting enzyme 1, chloroplastic (385 aa).

Residues 1-77 (MSVASFFSSL…PSPSLSPTPT (77 aa)) constitute a chloroplast transit peptide. The Acyl-ester intermediate role is filled by Ser-235. Catalysis depends on charge relay system residues Asp-327 and His-359.

Belongs to the AB hydrolase superfamily. In terms of assembly, homodimer. In terms of tissue distribution, expressed in roots, stems, leaves, petals, stamens and pistils, but not in bulb scales.

It is found in the plastid. Its subcellular location is the chloroplast. The catalysed reaction is 6-tuliposide A = tulipalin A + D-glucose. With respect to regulation, inhibited by NaF, AgNO(3), HgCl(2), CuSO(4) and phenylmethylsulfonyl fluoride (PMSF). Lactone-forming carboxylesterases, specifically catalyzing intramolecular transesterification, but not hydrolysis. Involved in the biosynthesis of tulipalins, defensive chemicals that show antimicrobial activities against a broad range of strains of bacteria and fungi. Substrates are 6-tuliposide A &gt; 6-tuliposide B. The chain is Tuliposide A-converting enzyme 1, chloroplastic (TCEA1) from Tulipa gesneriana (Garden tulip).